Here is a 201-residue protein sequence, read N- to C-terminus: E3 ubiquitin-protein ligase LAP (201 aa).

The Cytoplasmic segment spans residues 1–92 (MSTIVDMVDV…RDCHDSLLVN (92 aa)). The RING-CH-type zinc-finger motif lies at 9–69 (DVSLVDKCCW…AICETPYNVK (61 aa)). Zn(2+) contacts are provided by Cys-17, Cys-20, Cys-31, Cys-33, His-41, Cys-44, Cys-59, and Cys-62. Residues 93-113 (LPLCLIVGGISTYTLVSVEII) traverse the membrane as a helical segment. The Lumenal portion of the chain corresponds to 114 to 123 (KLMESEETSE). Residues 124–144 (LTKVFLVTSFLGPFIVTVLSA) traverse the membrane as a helical segment. Topologically, residues 145 to 201 (LRTCIDCRTYFLTTRKRNTIHTLQELEDDDDDDDDDDDDDDEEYADAVEEIIIGPSN) are cytoplasmic. The segment at 168–188 (QELEDDDDDDDDDDDDDDEEY) is disordered. The segment covering 169–188 (ELEDDDDDDDDDDDDDDEEY) has biased composition (acidic residues).

Belongs to the poxviridae LAP protein family.

Its subcellular location is the host membrane. The protein resides in the host Golgi apparatus. The protein localises to the host trans-Golgi network membrane. It localises to the host early endosome membrane. It catalyses the reaction S-ubiquitinyl-[E2 ubiquitin-conjugating enzyme]-L-cysteine + [acceptor protein]-L-lysine = [E2 ubiquitin-conjugating enzyme]-L-cysteine + N(6)-ubiquitinyl-[acceptor protein]-L-lysine.. Functionally, E3 ubiquitin-protein ligase which promotes ubiquitination and subsequent degradation of host MHC-I and CD4 molecules, presumably to prevent lysis of infected cells by cytotoxic T-lymphocytes and NK cell. Binds target molecules through transmembrane interaction. The result of this ubiquitination is the enhancement of the endocytosis of the target chain and the delivery to the lysosome, where it is proteolytically destroyed. This chain is E3 ubiquitin-protein ligase LAP, found in Oryctolagus cuniculus (Rabbit).